A 484-amino-acid polypeptide reads, in one-letter code: UDP-N-acetylmuramate--L-alanine ligase (484 aa).

Gly-127–Thr-133 is a binding site for ATP.

It belongs to the MurCDEF family.

The protein resides in the cytoplasm. It carries out the reaction UDP-N-acetyl-alpha-D-muramate + L-alanine + ATP = UDP-N-acetyl-alpha-D-muramoyl-L-alanine + ADP + phosphate + H(+). It participates in cell wall biogenesis; peptidoglycan biosynthesis. In terms of biological role, cell wall formation. This is UDP-N-acetylmuramate--L-alanine ligase from Shewanella amazonensis (strain ATCC BAA-1098 / SB2B).